Reading from the N-terminus, the 320-residue chain is o-succinylbenzoate synthase (320 aa).

K133 functions as the Proton donor in the catalytic mechanism. Mg(2+)-binding residues include D161, E190, and D213. K235 (proton acceptor) is an active-site residue.

This sequence belongs to the mandelate racemase/muconate lactonizing enzyme family. MenC type 1 subfamily. The cofactor is a divalent metal cation.

The enzyme catalyses (1R,6R)-6-hydroxy-2-succinyl-cyclohexa-2,4-diene-1-carboxylate = 2-succinylbenzoate + H2O. The protein operates within quinol/quinone metabolism; 1,4-dihydroxy-2-naphthoate biosynthesis; 1,4-dihydroxy-2-naphthoate from chorismate: step 4/7. Its pathway is quinol/quinone metabolism; menaquinone biosynthesis. Functionally, converts 2-succinyl-6-hydroxy-2,4-cyclohexadiene-1-carboxylate (SHCHC) to 2-succinylbenzoate (OSB). This is o-succinylbenzoate synthase from Shigella boydii serotype 4 (strain Sb227).